Reading from the N-terminus, the 329-residue chain is Beta-ketoacyl-[acyl-carrier-protein] synthase III (329 aa).

Active-site residues include Cys113 and His255. The segment at Gln256 to Arg260 is ACP-binding. Asn285 is a catalytic residue.

This sequence belongs to the thiolase-like superfamily. FabH family. In terms of assembly, homodimer.

It localises to the cytoplasm. The catalysed reaction is malonyl-[ACP] + acetyl-CoA + H(+) = 3-oxobutanoyl-[ACP] + CO2 + CoA. The protein operates within lipid metabolism; fatty acid biosynthesis. Its function is as follows. Catalyzes the condensation reaction of fatty acid synthesis by the addition to an acyl acceptor of two carbons from malonyl-ACP. Catalyzes the first condensation reaction which initiates fatty acid synthesis and may therefore play a role in governing the total rate of fatty acid production. Possesses both acetoacetyl-ACP synthase and acetyl transacylase activities. Its substrate specificity determines the biosynthesis of branched-chain and/or straight-chain of fatty acids. This Chlorobium phaeovibrioides (strain DSM 265 / 1930) (Prosthecochloris vibrioformis (strain DSM 265)) protein is Beta-ketoacyl-[acyl-carrier-protein] synthase III.